The chain runs to 316 residues: tRNA dimethylallyltransferase (316 aa).

17-24 (GPTASGKT) contributes to the ATP binding site. Residue 19 to 24 (TASGKT) participates in substrate binding. Interaction with substrate tRNA stretches follow at residues 42–45 (DSAL), 166–170 (QRLSR), 247–252 (RCVGYR), and 280–287 (KRQITWLR).

It belongs to the IPP transferase family. In terms of assembly, monomer. It depends on Mg(2+) as a cofactor.

The catalysed reaction is adenosine(37) in tRNA + dimethylallyl diphosphate = N(6)-dimethylallyladenosine(37) in tRNA + diphosphate. Functionally, catalyzes the transfer of a dimethylallyl group onto the adenine at position 37 in tRNAs that read codons beginning with uridine, leading to the formation of N6-(dimethylallyl)adenosine (i(6)A). The sequence is that of tRNA dimethylallyltransferase from Enterobacter sp. (strain 638).